Here is a 613-residue protein sequence, read N- to C-terminus: Dihydroxy-acid dehydratase (613 aa).

A Mg(2+)-binding site is contributed by aspartate 81. Cysteine 122 serves as a coordination point for [2Fe-2S] cluster. Positions 123 and 124 each coordinate Mg(2+). Lysine 124 carries the N6-carboxylysine modification. A [2Fe-2S] cluster-binding site is contributed by cysteine 193. Glutamate 489 provides a ligand contact to Mg(2+). Residue serine 515 is the Proton acceptor of the active site.

Belongs to the IlvD/Edd family. As to quaternary structure, homodimer. The cofactor is [2Fe-2S] cluster. Mg(2+) serves as cofactor.

The catalysed reaction is (2R)-2,3-dihydroxy-3-methylbutanoate = 3-methyl-2-oxobutanoate + H2O. The enzyme catalyses (2R,3R)-2,3-dihydroxy-3-methylpentanoate = (S)-3-methyl-2-oxopentanoate + H2O. It functions in the pathway amino-acid biosynthesis; L-isoleucine biosynthesis; L-isoleucine from 2-oxobutanoate: step 3/4. It participates in amino-acid biosynthesis; L-valine biosynthesis; L-valine from pyruvate: step 3/4. Its function is as follows. Functions in the biosynthesis of branched-chain amino acids. Catalyzes the dehydration of (2R,3R)-2,3-dihydroxy-3-methylpentanoate (2,3-dihydroxy-3-methylvalerate) into 2-oxo-3-methylpentanoate (2-oxo-3-methylvalerate) and of (2R)-2,3-dihydroxy-3-methylbutanoate (2,3-dihydroxyisovalerate) into 2-oxo-3-methylbutanoate (2-oxoisovalerate), the penultimate precursor to L-isoleucine and L-valine, respectively. This Pseudomonas putida (strain GB-1) protein is Dihydroxy-acid dehydratase.